Reading from the N-terminus, the 264-residue chain is 3-methyl-2-oxobutanoate hydroxymethyltransferase (264 aa).

Mg(2+) contacts are provided by Asp-45 and Asp-84. Residues 45–46 (DS), Asp-84, and Lys-112 contribute to the 3-methyl-2-oxobutanoate site. Residue Glu-114 participates in Mg(2+) binding. Glu-181 serves as the catalytic Proton acceptor.

It belongs to the PanB family. In terms of assembly, homodecamer; pentamer of dimers. Mg(2+) is required as a cofactor.

It localises to the cytoplasm. It catalyses the reaction 3-methyl-2-oxobutanoate + (6R)-5,10-methylene-5,6,7,8-tetrahydrofolate + H2O = 2-dehydropantoate + (6S)-5,6,7,8-tetrahydrofolate. It participates in cofactor biosynthesis; (R)-pantothenate biosynthesis; (R)-pantoate from 3-methyl-2-oxobutanoate: step 1/2. In terms of biological role, catalyzes the reversible reaction in which hydroxymethyl group from 5,10-methylenetetrahydrofolate is transferred onto alpha-ketoisovalerate to form ketopantoate. This Shigella sonnei (strain Ss046) protein is 3-methyl-2-oxobutanoate hydroxymethyltransferase.